A 106-amino-acid polypeptide reads, in one-letter code: Cytochrome c2 (106 aa).

Cysteine 19, cysteine 22, histidine 23, and methionine 84 together coordinate heme c.

The protein belongs to the cytochrome c family. Binds 1 heme c group covalently per subunit.

This is Cytochrome c2 from Rhodopila globiformis (Rhodopseudomonas globiformis).